A 472-amino-acid chain; its full sequence is Argininosuccinate lyase (472 aa).

It belongs to the lyase 1 family. Argininosuccinate lyase subfamily.

It localises to the cytoplasm. It carries out the reaction 2-(N(omega)-L-arginino)succinate = fumarate + L-arginine. The protein operates within amino-acid biosynthesis; L-arginine biosynthesis; L-arginine from L-ornithine and carbamoyl phosphate: step 3/3. The protein is Argininosuccinate lyase of Synechococcus sp. (strain CC9902).